The sequence spans 380 residues: Chorismate synthase (380 aa).

Residue Arg48 coordinates NADP(+). FMN-binding positions include 126-128 (HFS), Gly300, 315-319 (KPISS), and Arg342.

The protein belongs to the chorismate synthase family. Homotetramer. The cofactor is FMNH2.

It carries out the reaction 5-O-(1-carboxyvinyl)-3-phosphoshikimate = chorismate + phosphate. It participates in metabolic intermediate biosynthesis; chorismate biosynthesis; chorismate from D-erythrose 4-phosphate and phosphoenolpyruvate: step 7/7. Functionally, catalyzes the anti-1,4-elimination of the C-3 phosphate and the C-6 proR hydrogen from 5-enolpyruvylshikimate-3-phosphate (EPSP) to yield chorismate, which is the branch point compound that serves as the starting substrate for the three terminal pathways of aromatic amino acid biosynthesis. This reaction introduces a second double bond into the aromatic ring system. The sequence is that of Chorismate synthase from Lancefieldella parvula (strain ATCC 33793 / DSM 20469 / CCUG 32760 / JCM 10300 / KCTC 3663 / VPI 0546 / 1246) (Atopobium parvulum).